A 383-amino-acid chain; its full sequence is Histidine decarboxylase (383 aa).

Histidine 120 is a substrate binding site. Residue lysine 233 is modified to N6-(pyridoxal phosphate)lysine.

The protein belongs to the group II decarboxylase family. Homotetramer. Pyridoxal 5'-phosphate is required as a cofactor.

It carries out the reaction L-histidine + H(+) = histamine + CO2. The protein is Histidine decarboxylase of Acinetobacter baumannii (strain AB307-0294).